Reading from the N-terminus, the 154-residue chain is Myoglobin (154 aa).

One can recognise a Globin domain in the interval 2–148 (GLSDGEWQLV…FRNDIAAKYK (147 aa)). Ser4 bears the Phosphoserine mark. His65 serves as a coordination point for nitrite. His65 contacts O2. Position 68 is a phosphothreonine (Thr68). His94 contacts heme b.

Belongs to the globin family. Monomeric.

The protein localises to the cytoplasm. Its subcellular location is the sarcoplasm. The catalysed reaction is Fe(III)-heme b-[protein] + nitric oxide + H2O = Fe(II)-heme b-[protein] + nitrite + 2 H(+). The enzyme catalyses H2O2 + AH2 = A + 2 H2O. Functionally, monomeric heme protein which primary function is to store oxygen and facilitate its diffusion within muscle tissues. Reversibly binds oxygen through a pentacoordinated heme iron and enables its timely and efficient release as needed during periods of heightened demand. Depending on the oxidative conditions of tissues and cells, and in addition to its ability to bind oxygen, it also has a nitrite reductase activity whereby it regulates the production of bioactive nitric oxide. Under stress conditions, like hypoxia and anoxia, it also protects cells against reactive oxygen species thanks to its pseudoperoxidase activity. This chain is Myoglobin (MB), found in Lagostomus maximus (Plains viscacha).